Consider the following 100-residue polypeptide: Urease subunit gamma (100 aa).

It belongs to the urease gamma subunit family. As to quaternary structure, heterotrimer of UreA (gamma), UreB (beta) and UreC (alpha) subunits. Three heterotrimers associate to form the active enzyme.

The protein localises to the cytoplasm. It carries out the reaction urea + 2 H2O + H(+) = hydrogencarbonate + 2 NH4(+). The protein operates within nitrogen metabolism; urea degradation; CO(2) and NH(3) from urea (urease route): step 1/1. In Alcanivorax borkumensis (strain ATCC 700651 / DSM 11573 / NCIMB 13689 / SK2), this protein is Urease subunit gamma.